Reading from the N-terminus, the 456-residue chain is Transforming growth factor beta-1-induced transcript 1 protein (456 aa).

M1 is modified (N-acetylmethionine). Residues M1–G79 are disordered. Residues M1–S195 form a transcription activation region. The interval M1 to V235 is interaction with PTK2B/PYK2. Residues D3–T15 carry the LD motif 1 motif. At T33 the chain carries Phosphothreonine. Y55 is subject to Phosphotyrosine. Residue S63 is modified to Phosphoserine. Residues C78–P131 are interaction with PTK2/FAK1. An LD motif 2 motif is present at residues E87 to Q99. A disordered region spans residues Q109 to A146. The segment covering T116–R130 has biased composition (basic and acidic residues). Phosphoserine occurs at positions 132, 136, 138, 159, 181, and 189. Residues S132 to P142 are compositionally biased toward pro residues. An LD motif 3 motif is present at residues E152–F163. Positions Q166–D200 are disordered. Positions S198 to L210 match the LD motif 4 motif. LIM zinc-binding domains follow at residues G221 to P280, R281 to A338, P339 to S398, and L399 to G456. S398 carries the post-translational modification Phosphoserine. T402 is modified (phosphothreonine).

This sequence belongs to the paxillin family. As to quaternary structure, homooligomer. Interacts with CRIP2, HSPB1, ILK, LIMS1, LIMS2, NCK2, NUDT16L1, PAK, PPARG, PTPN12, TCF3, TCF7L2 and VCL. Forms a complex with GIT1 and ARHGEF7. Interacts with AR/androgen receptor in a ligand-dependent manner. Interacts with CSK, LYN, MAPK15, NR3C1, PPARG, PTK2/FAK1, PTK2B/PYK2, SLC6A3, SLC6A4, SMAD3, SRC and talin. Interacts (via LIM zinc-binding domain 2) with CBLC (via RING-type zinc finger); the interaction is direct and enhances CBLC E3 ubiquitin-protein ligase activity. Phosphorylated by gonadotropin-releasing hormone-activated SRC.

The protein localises to the cell junction. Its subcellular location is the focal adhesion. It is found in the nucleus matrix. It localises to the cytoplasm. The protein resides in the cytoskeleton. Functionally, functions as a molecular adapter coordinating multiple protein-protein interactions at the focal adhesion complex and in the nucleus. Links various intracellular signaling modules to plasma membrane receptors and regulates the Wnt and TGFB signaling pathways. May also regulate SLC6A3 and SLC6A4 targeting to the plasma membrane hence regulating their activity. In the nucleus, functions as a nuclear receptor coactivator regulating glucocorticoid, androgen, mineralocorticoid and progesterone receptor transcriptional activity. May play a role in the processes of cell growth, proliferation, migration, differentiation and senescence. May have a zinc-dependent DNA-binding activity. This chain is Transforming growth factor beta-1-induced transcript 1 protein (TGFB1I1), found in Bos taurus (Bovine).